The following is a 278-amino-acid chain: Small ribosomal subunit biogenesis GTPase RsgA (278 aa).

Residues 62-218 enclose the CP-type G domain; the sequence is KNTLVRPKVV…ICDTPGFNVI (157 aa). GTP is bound by residues 112-115 and 162-170; these read TKND and GQSGVGKSS. The Zn(2+) site is built by Cys241, Cys246, His248, and Cys254.

It belongs to the TRAFAC class YlqF/YawG GTPase family. RsgA subfamily. As to quaternary structure, monomer. Associates with 30S ribosomal subunit, binds 16S rRNA. Zn(2+) serves as cofactor.

It localises to the cytoplasm. Its function is as follows. One of several proteins that assist in the late maturation steps of the functional core of the 30S ribosomal subunit. Helps release RbfA from mature subunits. May play a role in the assembly of ribosomal proteins into the subunit. Circularly permuted GTPase that catalyzes slow GTP hydrolysis, GTPase activity is stimulated by the 30S ribosomal subunit. The sequence is that of Small ribosomal subunit biogenesis GTPase RsgA from Mycoplasma pneumoniae (strain ATCC 29342 / M129 / Subtype 1) (Mycoplasmoides pneumoniae).